The primary structure comprises 559 residues: Cytoplasmic polyadenylation element-binding protein 1 (559 aa).

The disordered stretch occupies residues 222-243 (SRMDHSSSPLTPPPSASPSGSL). RRM domains lie at 304–401 (CKVF…DAQV) and 423–504 (NTVF…PYLE). The Zn(2+) site is built by Cys-508, Cys-511, Cys-520, Cys-525, Cys-530, Cys-533, His-538, and His-546.

The protein belongs to the RRM CPEB family. Expressed in oocytes (at protein level). During oocyte maturation becomes detectable at stage Ib, and remains ubiquitously distributed within the oocyte cytoplasm until stage II. It then follows a gradual accumulation to the future animal pole during stage III, and remains localized to this pole at stage IV (at protein level). Expressed in oocytes, blastomeres and pre-mid-blastula transition embryos. Its expression during oogenesis is ubiquitous at stages I and II, but gradually accumulated at the periphery of the oocyte in the presumptive animal pole during stage III. Expression was maintained in that region at stage IV, and then became delocalized at stage V to cover a much broader area presumably encompassing the future blastodisc.

The protein localises to the cytoplasm. Functionally, sequence-specific RNA-binding protein that regulates mRNA cytoplasmic polyadenylation and translation initiation during oocyte maturation and early development. Binds to the cytoplasmic polyadenylation element (CPE), an uridine-rich sequence element (consensus sequence 5'-UUUUUAU-3') within the mRNA 3'-UTR. In Danio rerio (Zebrafish), this protein is Cytoplasmic polyadenylation element-binding protein 1 (cpeb1).